Reading from the N-terminus, the 451-residue chain is Probable phosphoglucosamine mutase (451 aa).

S96 serves as the catalytic Phosphoserine intermediate. Mg(2+) is bound by residues S96, D233, D235, and D237. S96 carries the post-translational modification Phosphoserine.

Belongs to the phosphohexose mutase family. Mg(2+) is required as a cofactor. Post-translationally, activated by phosphorylation.

It carries out the reaction alpha-D-glucosamine 1-phosphate = D-glucosamine 6-phosphate. In terms of biological role, catalyzes the conversion of glucosamine-6-phosphate to glucosamine-1-phosphate. The chain is Probable phosphoglucosamine mutase from Pyrococcus horikoshii (strain ATCC 700860 / DSM 12428 / JCM 9974 / NBRC 100139 / OT-3).